Reading from the N-terminus, the 283-residue chain is 5'-nucleotidase SurE (283 aa).

Residues Asp-14, Asp-15, Ser-47, and Asn-105 each coordinate a divalent metal cation.

This sequence belongs to the SurE nucleotidase family. The cofactor is a divalent metal cation.

Its subcellular location is the cytoplasm. The catalysed reaction is a ribonucleoside 5'-phosphate + H2O = a ribonucleoside + phosphate. Its function is as follows. Nucleotidase that shows phosphatase activity on nucleoside 5'-monophosphates. The sequence is that of 5'-nucleotidase SurE from Chlamydia muridarum (strain MoPn / Nigg).